Here is an 898-residue protein sequence, read N- to C-terminus: Protein argonaute 1 (898 aa).

Residues 1–52 (MLALNAGSQYPGRGRGRGRGDGGNRVHKHDGINRYHGGFRGGRGGGGGGFRD) are disordered. Positions 18-33 (GRGDGGNRVHKHDGIN) are enriched in basic and acidic residues. The segment covering 38–50 (GFRGGRGGGGGGF) has biased composition (gly residues). A PAZ domain is found at 283–378 (KCSDEMRRLR…IFADRTKMSR (96 aa)). A Piwi domain is found at 542-883 (FAMVKLRTKE…YARKYGSLKS (342 aa)).

Belongs to the argonaute family.

The protein localises to the cytoplasm. In terms of biological role, involved in RNA-mediated gene silencing (RNAi) of mobile elements and repeats including retroposons SLACS (Spliced Leader Associated Conserved Sequence), TATE (Telomere-Associated Transposable Element) and TAS-like sequences (Telomere Associated Sequence), and a family of 74-nucleotide long tandem repeats, CIR74. Predominantly binds to siRNAs derived from SLACS and TATE transposable elements and to a lesser extent to siRNAs from TAS-like and CIR74 elements. The sequence is that of Protein argonaute 1 from Leishmania braziliensis.